We begin with the raw amino-acid sequence, 138 residues long: Transcription antitermination protein NusB (138 aa).

The protein belongs to the NusB family.

Functionally, involved in transcription antitermination. Required for transcription of ribosomal RNA (rRNA) genes. Binds specifically to the boxA antiterminator sequence of the ribosomal RNA (rrn) operons. The chain is Transcription antitermination protein NusB from Coxiella burnetii (strain CbuK_Q154) (Coxiella burnetii (strain Q154)).